We begin with the raw amino-acid sequence, 416 residues long: Serine/threonine transporter SstT (416 aa).

Transmembrane regions (helical) follow at residues 14-34 (GSIV…ALLS), 43-63 (FLGT…VFVL), 82-102 (VLVL…VASF), 141-161 (ALAT…GVAL), 192-212 (IGVF…ALMG), 220-240 (LLGS…FLAI), 298-318 (MAGA…TLGV), 339-359 (ASGV…LFGI), and 363-383 (VAMQ…SAET).

Belongs to the dicarboxylate/amino acid:cation symporter (DAACS) (TC 2.A.23) family.

The protein localises to the cell inner membrane. It catalyses the reaction L-serine(in) + Na(+)(in) = L-serine(out) + Na(+)(out). It carries out the reaction L-threonine(in) + Na(+)(in) = L-threonine(out) + Na(+)(out). Functionally, involved in the import of serine and threonine into the cell, with the concomitant import of sodium (symport system). This chain is Serine/threonine transporter SstT, found in Laribacter hongkongensis (strain HLHK9).